The following is a 51-amino-acid chain: uncharacterized protein (51 aa).

This is an uncharacterized protein from Treponema pallidum (strain Nichols).